The chain runs to 166 residues: 16S rRNA aminocarboxypropyltransferase (166 aa).

Residues Thr-17, Ile-62, Leu-84, Tyr-99, and Ser-103 each coordinate S-adenosyl-L-methionine.

This sequence belongs to the TDD superfamily. TSR3 family.

It is found in the cytoplasm. It catalyses the reaction an N(1)-methylpseudouridine in rRNA + S-adenosyl-L-methionine = N(1)-methyl-N(3)-[(3S)-3-amino-3-carboxypropyl]pseudouridine in rRNA + S-methyl-5'-thioadenosine + H(+). In terms of biological role, aminocarboxypropyltransferase that catalyzes the aminocarboxypropyl transfer on pseudouridine corresponding to position 914 in M.jannaschii 16S rRNA. It constitutes the last step in biosynthesis of the hypermodified N1-methyl-N3-(3-amino-3-carboxypropyl) pseudouridine (m1acp3-Psi). The protein is 16S rRNA aminocarboxypropyltransferase of Saccharolobus islandicus (strain M.16.27) (Sulfolobus islandicus).